Reading from the N-terminus, the 480-residue chain is Aspartyl/glutamyl-tRNA(Asn/Gln) amidotransferase subunit B (480 aa).

Belongs to the GatB/GatE family. GatB subfamily. As to quaternary structure, heterotrimer of A, B and C subunits.

It catalyses the reaction L-glutamyl-tRNA(Gln) + L-glutamine + ATP + H2O = L-glutaminyl-tRNA(Gln) + L-glutamate + ADP + phosphate + H(+). It carries out the reaction L-aspartyl-tRNA(Asn) + L-glutamine + ATP + H2O = L-asparaginyl-tRNA(Asn) + L-glutamate + ADP + phosphate + 2 H(+). Allows the formation of correctly charged Asn-tRNA(Asn) or Gln-tRNA(Gln) through the transamidation of misacylated Asp-tRNA(Asn) or Glu-tRNA(Gln) in organisms which lack either or both of asparaginyl-tRNA or glutaminyl-tRNA synthetases. The reaction takes place in the presence of glutamine and ATP through an activated phospho-Asp-tRNA(Asn) or phospho-Glu-tRNA(Gln). This Streptococcus pneumoniae serotype 19F (strain G54) protein is Aspartyl/glutamyl-tRNA(Asn/Gln) amidotransferase subunit B.